A 387-amino-acid chain; its full sequence is 3-ketoacyl-CoA thiolase (387 aa).

Residue Cys91 is the Acyl-thioester intermediate of the active site. Catalysis depends on proton acceptor residues His343 and Cys373.

It belongs to the thiolase-like superfamily. Thiolase family. Heterotetramer of two alpha chains (FadB) and two beta chains (FadA).

Its subcellular location is the cytoplasm. The catalysed reaction is an acyl-CoA + acetyl-CoA = a 3-oxoacyl-CoA + CoA. Its pathway is lipid metabolism; fatty acid beta-oxidation. Its function is as follows. Catalyzes the final step of fatty acid oxidation in which acetyl-CoA is released and the CoA ester of a fatty acid two carbons shorter is formed. The sequence is that of 3-ketoacyl-CoA thiolase from Aeromonas salmonicida (strain A449).